The chain runs to 532 residues: MDITTTEIYHDGHHTPHGWRRWLFSTNHKDIGIMYIIFAVFAGIVGGLFSLLFRLELAMPGGTFLNHDFQLYNVLITAHAVIMVFFMIMPALFGGFGNYFVPLLIGAPDMAFPRLNNISFWLLVPAFLLLMGSAFVDGGPGTGWTLYPPLSNLSGHPGAAVDMAIFSLHLTGLSSILGSINLIVTIFNMRAPGMGLFKMPLFVWSILVTAFLIILAMPVLGGAITMLLTDRNFGTTFFKPDGGGDPVLFQHLFWFFGHPEVYIVILPGFGIVSQVISTFSRKPIFGYQGMIGAMVIIGFVGFIVWAHHMFTVGLSYNALIYFTAGTMIIAVPTGIKIFSWIATMWGGSITFPTPMLFSIGFIILFTIGGVTGIILSNSALDRVLHDTYYVVAHFHYTMSLGALFTAFAGFYYWFGKISGKQYPDILGKIHFWITFIGVNLTFFPQHFLGLAGMPRRIPDYPEAFAGWNMVSSIGAGISMFAALYFVFIVFYTLKYGKDCPNNPWGEGADTLEWTLTSPPPFHTFETPPHIEG.

The next 8 helical transmembrane spans lie at 33–53 (IMYI…SLLF), 74–94 (VLIT…ALFG), 95–115 (GFGN…FPRL), 118–138 (ISFW…FVDG), 163–183 (MAIF…INLI), 200–220 (PLFV…MPVL), 252–272 (LFWF…FGIV), and 284–304 (IFGY…GFIV). Histidine 79 provides a ligand contact to Fe(II)-heme a. The Cu cation site is built by histidine 258 and tyrosine 262. Cu cation-binding residues include histidine 307 and histidine 308. 2 helical membrane-spanning segments follow: residues 318 to 338 (ALIY…IKIF) and 355 to 375 (MLFS…GIIL). Histidine 393 lines the heme a3 pocket. 3 consecutive transmembrane segments (helical) span residues 394-414 (FHYT…YYWF), 431-451 (FWIT…LGLA), and 473-493 (IGAG…FYTL). Histidine 395 serves as a coordination point for Fe(II)-heme a.

It belongs to the heme-copper respiratory oxidase family.

The protein localises to the cell membrane. It catalyses the reaction 4 Fe(II)-[cytochrome c] + O2 + 8 H(+)(in) = 4 Fe(III)-[cytochrome c] + 2 H2O + 4 H(+)(out). It participates in energy metabolism; oxidative phosphorylation. Its function is as follows. Cytochrome c oxidase is the component of the respiratory chain that catalyzes the reduction of oxygen to water. Subunits 1-3 form the functional core of the enzyme complex. CO I is the catalytic subunit of the enzyme. Electrons originating in cytochrome c are transferred via the copper A center of subunit 2 and heme A of subunit 1 to the bimetallic center formed by heme A3 and copper B. The chain is Probable cytochrome c oxidase subunit 1 (ctaD) from Rickettsia conorii (strain ATCC VR-613 / Malish 7).